A 491-amino-acid chain; its full sequence is MNTQQLAKLRSIVPEMRRVRHIHFVGIGGAGMGGIAEVLANEGYQISGSDLAPNPVTQQLMNLGATIYFNHRPENVRDASVVVVSSAISADNPEIVAAHEARIPVIRRAEMLAELMRFRHGIAIAGTHGKTTTTAMVSSIYAEAGLDPTFVNGGLVKAAGVHARLGHGRYLIAEADESDASFLHLQPMVAIVTNIEADHMDTYQGDFENLKQTFINFLHNLPFYGRAVMCVDDPVIRELLPRVGRQTTTYGFSEDADVRVEDYQQIGPQGHFTLLRQDKEPMRVTLNAPGRHNALNAAAAVAVATEEGIDDEAILRALESFQGTGRRFDFLGEFPLEPVNGKSGTAMLVDDYGHHPTEVDATIKAARAGWPDKNLVMLFQPHRFTRTRDLYDDFANVLTQVDTLLMLEVYPAGEAPIPGADSRSLCRTIRGRGKIDPILVPDPAQVAEMLAPVLTGNDLILVQGAGNIGKIARSLAEIKLKPQTPEEEQHD.

ATP is bound at residue 126 to 132 (GTHGKTT).

It belongs to the MurCDEF family.

Its subcellular location is the cytoplasm. The enzyme catalyses UDP-N-acetyl-alpha-D-muramate + L-alanine + ATP = UDP-N-acetyl-alpha-D-muramoyl-L-alanine + ADP + phosphate + H(+). It functions in the pathway cell wall biogenesis; peptidoglycan biosynthesis. Its function is as follows. Cell wall formation. This chain is UDP-N-acetylmuramate--L-alanine ligase, found in Escherichia coli (strain SMS-3-5 / SECEC).